A 321-amino-acid chain; its full sequence is NADH-ubiquinone oxidoreductase chain 1 (321 aa).

8 helical membrane-spanning segments follow: residues 6–26 (IVPPALLIISILMAVAFLTAL), 67–87 (LLATPTLFILAPTAALMLALA), 103–123 (LGLLLLLAMSSLMVYSFLWSG), 143–163 (ISYEVTLAIIVLSIVLLSGGF), 174–194 (PLYLALATWPSMMMWYTSTLA), 220–240 (ASPFALFFLAEYANIMLMNTL), 256–276 (ALFTIALMSKALLLTMSFLWV), and 296–316 (FLPMTLTLCLWHSSVPMSMFG).

This sequence belongs to the complex I subunit 1 family.

The protein resides in the mitochondrion inner membrane. It catalyses the reaction a ubiquinone + NADH + 5 H(+)(in) = a ubiquinol + NAD(+) + 4 H(+)(out). Functionally, core subunit of the mitochondrial membrane respiratory chain NADH dehydrogenase (Complex I) that is believed to belong to the minimal assembly required for catalysis. Complex I functions in the transfer of electrons from NADH to the respiratory chain. The immediate electron acceptor for the enzyme is believed to be ubiquinone. The polypeptide is NADH-ubiquinone oxidoreductase chain 1 (MT-ND1) (Alligator mississippiensis (American alligator)).